A 134-amino-acid chain; its full sequence is ATP synthase epsilon chain (134 aa).

Belongs to the ATPase epsilon chain family. As to quaternary structure, F-type ATPases have 2 components, CF(1) - the catalytic core - and CF(0) - the membrane proton channel. CF(1) has five subunits: alpha(3), beta(3), gamma(1), delta(1), epsilon(1). CF(0) has three main subunits: a, b and c.

It is found in the cell inner membrane. Produces ATP from ADP in the presence of a proton gradient across the membrane. In Sinorhizobium fredii (strain NBRC 101917 / NGR234), this protein is ATP synthase epsilon chain.